The sequence spans 80 residues: Exodeoxyribonuclease 7 small subunit (80 aa).

It belongs to the XseB family. As to quaternary structure, heterooligomer composed of large and small subunits.

It localises to the cytoplasm. The catalysed reaction is Exonucleolytic cleavage in either 5'- to 3'- or 3'- to 5'-direction to yield nucleoside 5'-phosphates.. Its function is as follows. Bidirectionally degrades single-stranded DNA into large acid-insoluble oligonucleotides, which are then degraded further into small acid-soluble oligonucleotides. This is Exodeoxyribonuclease 7 small subunit from Rickettsia akari (strain Hartford).